Reading from the N-terminus, the 489-residue chain is Poly(A) RNA polymerase GLD2 (489 aa).

Positions 93-118 (RQRFSCPSPHNQSARNSNFTSQPVTR) are disordered. The span at 100–116 (SPHNQSARNSNFTSQPV) shows a compositional bias: polar residues. Mg(2+)-binding residues include D219 and D221. A PAP-associated domain is found at 386–440 (SLGDLFLGFLRYYATVFKWDKQVISVRMARTLPKSNCKEWKDKFICVEEPFNRTN).

Belongs to the DNA polymerase type-B-like family. GLD2 subfamily. Mg(2+) is required as a cofactor. Mn(2+) serves as cofactor.

The protein localises to the cytoplasm. The catalysed reaction is RNA(n) + ATP = RNA(n)-3'-adenine ribonucleotide + diphosphate. In terms of biological role, cytoplasmic poly(A) RNA polymerase that adds successive AMP monomers to the 3'-end of specific RNAs, forming a poly(A) tail. In contrast to the canonical nuclear poly(A) RNA polymerase, it only adds poly(A) to selected cytoplasmic mRNAs. May not play a role in replication-dependent histone mRNA degradation. The protein is Poly(A) RNA polymerase GLD2 of Danio rerio (Zebrafish).